The chain runs to 324 residues: Endochitinase B (324 aa).

An N-terminal signal peptide occupies residues 1 to 23 (MRLREFTALSSLLFSLLLLSASA). Positions 24-65 (EQCGSQAGGARCASGLCCSKFGWCGNTNDYCGPGNCQSQCPG) constitute a Chitin-binding type-1 domain. 4 disulfide bridges follow: cysteine 26-cysteine 41, cysteine 35-cysteine 47, cysteine 40-cysteine 54, and cysteine 59-cysteine 63. Residues proline 67 and proline 69 each carry the 4-hydroxyproline modification. 3 cysteine pairs are disulfide-bonded: cysteine 96/cysteine 158, cysteine 170/cysteine 178, and cysteine 277/cysteine 309. Catalysis depends on glutamate 140, which acts as the Proton donor. Positions 318–324 (GLLVDTM) are cleaved as a propeptide — removed in mature form.

This sequence belongs to the glycosyl hydrolase 19 family. Chitinase class I subfamily. Post-translationally, the 4-hydroxyproline residues are not glycosylated in this plant vacuolar protein.

The protein resides in the vacuole. It carries out the reaction Random endo-hydrolysis of N-acetyl-beta-D-glucosaminide (1-&gt;4)-beta-linkages in chitin and chitodextrins.. Functionally, defense against chitin-containing fungal pathogens. The polypeptide is Endochitinase B (CHN50) (Nicotiana tabacum (Common tobacco)).